A 220-amino-acid polypeptide reads, in one-letter code: Nucleolar protein 12 (220 aa).

The stretch at 31-86 (HKRKMQRRKTAVEEIKRKIKEEQKKMKEERHKEYMKMLKEREEALCELEENDELEE) forms a coiled coil. Positions 109-220 (ISDLDLSGIR…QTGKTRRRRN (112 aa)) are disordered. Residues 139 to 148 (EKGADEEKPK) show a composition bias toward basic and acidic residues. Basic residues-rich tracts occupy residues 176 to 186 (RSQRKSGKRPS) and 205 to 220 (KTQR…RRRN).

The protein belongs to the RRP17 family.

The protein localises to the nucleus. It is found in the nucleolus. Functionally, may bind to rRNA. This chain is Nucleolar protein 12 (nol12), found in Xenopus laevis (African clawed frog).